A 256-amino-acid chain; its full sequence is Imidazole glycerol phosphate synthase subunit HisF (256 aa).

Residues D12 and D131 contribute to the active site.

This sequence belongs to the HisA/HisF family. Heterodimer of HisH and HisF.

It is found in the cytoplasm. The catalysed reaction is 5-[(5-phospho-1-deoxy-D-ribulos-1-ylimino)methylamino]-1-(5-phospho-beta-D-ribosyl)imidazole-4-carboxamide + L-glutamine = D-erythro-1-(imidazol-4-yl)glycerol 3-phosphate + 5-amino-1-(5-phospho-beta-D-ribosyl)imidazole-4-carboxamide + L-glutamate + H(+). The protein operates within amino-acid biosynthesis; L-histidine biosynthesis; L-histidine from 5-phospho-alpha-D-ribose 1-diphosphate: step 5/9. In terms of biological role, IGPS catalyzes the conversion of PRFAR and glutamine to IGP, AICAR and glutamate. The HisF subunit catalyzes the cyclization activity that produces IGP and AICAR from PRFAR using the ammonia provided by the HisH subunit. The polypeptide is Imidazole glycerol phosphate synthase subunit HisF (Pseudomonas syringae pv. tomato (strain ATCC BAA-871 / DC3000)).